A 122-amino-acid chain; its full sequence is Prefoldin subunit 1 (122 aa).

This sequence belongs to the prefoldin subunit beta family. As to quaternary structure, heterohexamer of two PFD-alpha type and four PFD-beta type subunits.

Functionally, binds specifically to cytosolic chaperonin (c-CPN) and transfers target proteins to it. Binds to nascent polypeptide chain and promotes folding in an environment in which there are many competing pathways for nonnative proteins. In Danio rerio (Zebrafish), this protein is Prefoldin subunit 1 (pfdn1).